The chain runs to 183 residues: Probable calcium-binding protein CML47 (183 aa).

2 EF-hand domains span residues 112–147 (MGKEIVKEAFRLFDENQDGFIDENELKHVLSLLGYD) and 149–183 (CTKMECRKMVKVYDENRDGKIDFYEFVKLIEKSFS). Positions 125, 127, 129, 136, 162, 164, 166, 168, and 173 each coordinate Ca(2+).

Its function is as follows. Potential calcium sensor. In Arabidopsis thaliana (Mouse-ear cress), this protein is Probable calcium-binding protein CML47 (CML47).